Here is a 269-residue protein sequence, read N- to C-terminus: Shikimate dehydrogenase (NADP(+)) (269 aa).

Residues 22–24 (TLS) and threonine 68 contribute to the shikimate site. Lysine 72 functions as the Proton acceptor in the catalytic mechanism. Shikimate contacts are provided by asparagine 93 and aspartate 104. Residues 128-132 (GAGGA), 152-157 (NRTNLR), and phenylalanine 210 contribute to the NADP(+) site. Position 212 (tyrosine 212) interacts with shikimate. Residue glycine 233 participates in NADP(+) binding.

This sequence belongs to the shikimate dehydrogenase family. Homodimer.

It carries out the reaction shikimate + NADP(+) = 3-dehydroshikimate + NADPH + H(+). The protein operates within metabolic intermediate biosynthesis; chorismate biosynthesis; chorismate from D-erythrose 4-phosphate and phosphoenolpyruvate: step 4/7. Functionally, involved in the biosynthesis of the chorismate, which leads to the biosynthesis of aromatic amino acids. Catalyzes the reversible NADPH linked reduction of 3-dehydroshikimate (DHSA) to yield shikimate (SA). The polypeptide is Shikimate dehydrogenase (NADP(+)) (Saccharolobus islandicus (strain L.S.2.15 / Lassen #1) (Sulfolobus islandicus)).